Reading from the N-terminus, the 297-residue chain is Probable endonuclease 4 (297 aa).

The tract at residues 1 to 21 (MPEIGAHVSAAGGPQRAPERG) is disordered. Zn(2+) contacts are provided by His67, His107, Glu145, Asp179, His182, His216, Asp229, His231, and Glu261.

It belongs to the AP endonuclease 2 family. It depends on Zn(2+) as a cofactor.

It carries out the reaction Endonucleolytic cleavage to 5'-phosphooligonucleotide end-products.. Functionally, endonuclease IV plays a role in DNA repair. It cleaves phosphodiester bonds at apurinic or apyrimidinic (AP) sites, generating a 3'-hydroxyl group and a 5'-terminal sugar phosphate. In Halorhodospira halophila (strain DSM 244 / SL1) (Ectothiorhodospira halophila (strain DSM 244 / SL1)), this protein is Probable endonuclease 4.